Here is a 300-residue protein sequence, read N- to C-terminus: Ribosomal protein L11 methyltransferase (300 aa).

Residues T152, G173, D195, and N234 each coordinate S-adenosyl-L-methionine.

Belongs to the methyltransferase superfamily. PrmA family.

It is found in the cytoplasm. It carries out the reaction L-lysyl-[protein] + 3 S-adenosyl-L-methionine = N(6),N(6),N(6)-trimethyl-L-lysyl-[protein] + 3 S-adenosyl-L-homocysteine + 3 H(+). Methylates ribosomal protein L11. The sequence is that of Ribosomal protein L11 methyltransferase from Burkholderia ambifaria (strain ATCC BAA-244 / DSM 16087 / CCUG 44356 / LMG 19182 / AMMD) (Burkholderia cepacia (strain AMMD)).